We begin with the raw amino-acid sequence, 469 residues long: Cysteine protease ATG4D (469 aa).

Residues 1–29 (MNSVSPLATQYGSPKGSQQMENRSTQSGG) show a composition bias toward polar residues. Residues 1 to 41 (MNSVSPLATQYGSPKGSQQMENRSTQSGGHEQRKMGHQDAT) are disordered. The active-site Nucleophile is the Cys-131. The tract at residues 169–191 (IRSSSPPSMPLSSLATGHSAGDY) is disordered. The span at 171–182 (SSSPPSMPLSSL) shows a compositional bias: low complexity. Active-site residues include Asp-356 and His-358. Positions 436–469 (QEYAEGPQSSSHPPVCRKKGPLVKRPSSDEFEFL) are disordered.

Belongs to the peptidase C54 family.

It is found in the cytoplasm. It catalyses the reaction [protein]-C-terminal L-amino acid-glycyl-phosphatidylethanolamide + H2O = [protein]-C-terminal L-amino acid-glycine + a 1,2-diacyl-sn-glycero-3-phosphoethanolamine. The enzyme catalyses [protein]-C-terminal L-amino acid-glycyl-phosphatidylserine + H2O = [protein]-C-terminal L-amino acid-glycine + a 1,2-diacyl-sn-glycero-3-phospho-L-serine. Functionally, cysteine protease that plays a key role in autophagy by mediating both proteolytic activation and delipidation of ATG8 family proteins. The protease activity is required for proteolytic activation of ATG8 family proteins to reveal a C-terminal glycine. Exposure of the glycine at the C-terminus is essential for ATG8 proteins conjugation to phosphatidylethanolamine (PE) and insertion to membranes, which is necessary for autophagy. In addition to the protease activity, also mediates delipidation of ATG8 family proteins. Catalyzes delipidation of PE-conjugated forms of ATG8 proteins during macroautophagy. Also involved in non-canonical autophagy, a parallel pathway involving conjugation of ATG8 proteins to single membranes at endolysosomal compartments, by catalyzing delipidation of ATG8 proteins conjugated to phosphatidylserine (PS). The polypeptide is Cysteine protease ATG4D (Xenopus laevis (African clawed frog)).